The chain runs to 356 residues: MRVTDFSFELPESLIAHYPMPERSSCRLLLLDGPTGALTHGTFTDLLDKLNPGDLLVFNNTRVIPARLFGRKASGGKIEVLVERMLDDKRILAHIRASKAPKPGAELLLGDDESINATMTARHGALFEVEFNDERSVLDILNSIGHMPLPPYIDRPDEDADRELYQTVYSEKPGAVAAPTAGLHFDEPLLEKLRAKGVEMAFVTLHVGAGTFQPVRVDTIEDHIMHSEYAEVPQDVVDAVLAAKARGNRVIAVGTTSVRSLESAAQAAKNDLIEPFFDDTQIFIYPGFQYKVVDALVTNFHLPESTLIMLVSAFAGYQHTMNAYKAAVEEKYRFFSYGDAMFITYNPQAINERVGE.

The protein belongs to the QueA family. In terms of assembly, monomer.

It localises to the cytoplasm. It catalyses the reaction 7-aminomethyl-7-carbaguanosine(34) in tRNA + S-adenosyl-L-methionine = epoxyqueuosine(34) in tRNA + adenine + L-methionine + 2 H(+). It participates in tRNA modification; tRNA-queuosine biosynthesis. Its function is as follows. Transfers and isomerizes the ribose moiety from AdoMet to the 7-aminomethyl group of 7-deazaguanine (preQ1-tRNA) to give epoxyqueuosine (oQ-tRNA). This is S-adenosylmethionine:tRNA ribosyltransferase-isomerase from Escherichia coli (strain ATCC 8739 / DSM 1576 / NBRC 3972 / NCIMB 8545 / WDCM 00012 / Crooks).